The following is a 180-amino-acid chain: Ribosome rescue factor SmrB (180 aa).

Residues 98-173 enclose the Smr domain; that stretch reads LDLHGLTQLQ…GNAALLVLVA (76 aa).

The protein belongs to the SmrB family. In terms of assembly, associates with collided ribosomes, but not with correctly translating polysomes.

In terms of biological role, acts as a ribosome collision sensor. Detects stalled/collided disomes (pairs of ribosomes where the leading ribosome is stalled and a second ribosome has collided with it) and endonucleolytically cleaves mRNA at the 5' boundary of the stalled ribosome. Stalled/collided disomes form a new interface (primarily via the 30S subunits) that binds SmrB. Cleaved mRNA becomes available for tmRNA ligation, leading to ribosomal subunit dissociation and rescue of stalled ribosomes. In Pectobacterium atrosepticum (strain SCRI 1043 / ATCC BAA-672) (Erwinia carotovora subsp. atroseptica), this protein is Ribosome rescue factor SmrB.